The following is a 177-amino-acid chain: UPF0114 protein jhp_0175 (177 aa).

Transmembrane regions (helical) follow at residues 15–35 (WLLA…GYVF), 54–74 (LVLS…VLMV), and 145–165 (PIFW…LTAV).

Belongs to the UPF0114 family.

It is found in the cell membrane. This Helicobacter pylori (strain J99 / ATCC 700824) (Campylobacter pylori J99) protein is UPF0114 protein jhp_0175.